The chain runs to 89 residues: Co-chaperonin GroES (89 aa).

The protein belongs to the GroES chaperonin family. Heptamer of 7 subunits arranged in a ring. Interacts with the chaperonin GroEL.

Its subcellular location is the cytoplasm. Together with the chaperonin GroEL, plays an essential role in assisting protein folding. The GroEL-GroES system forms a nano-cage that allows encapsulation of the non-native substrate proteins and provides a physical environment optimized to promote and accelerate protein folding. GroES binds to the apical surface of the GroEL ring, thereby capping the opening of the GroEL channel. This Fervidobacterium nodosum (strain ATCC 35602 / DSM 5306 / Rt17-B1) protein is Co-chaperonin GroES.